A 314-amino-acid polypeptide reads, in one-letter code: DNA-directed RNA polymerase subunit alpha (314 aa).

The interval 1–228 is alpha N-terminal domain (alpha-NTD); the sequence is MAQYTIECVE…DQLRPLQEIT (228 aa). The alpha C-terminal domain (alpha-CTD) stretch occupies residues 241 to 314; the sequence is NTVGQVPIEE…SLPKDKPARS (74 aa).

Belongs to the RNA polymerase alpha chain family. As to quaternary structure, in cyanobacteria the RNAP catalytic core is composed of 2 alpha, 1 beta, 1 beta', 1 gamma and 1 omega subunit. When a sigma factor is associated with the core the holoenzyme is formed, which can initiate transcription.

The catalysed reaction is RNA(n) + a ribonucleoside 5'-triphosphate = RNA(n+1) + diphosphate. In terms of biological role, DNA-dependent RNA polymerase catalyzes the transcription of DNA into RNA using the four ribonucleoside triphosphates as substrates. The chain is DNA-directed RNA polymerase subunit alpha from Gloeobacter violaceus (strain ATCC 29082 / PCC 7421).